A 272-amino-acid chain; its full sequence is Methylesterase 8 (272 aa).

Residue Ser-102 is the Acyl-ester intermediate of the active site. Active-site charge relay system residues include Asp-222 and His-250.

This sequence belongs to the AB hydrolase superfamily. Methylesterase family.

In terms of biological role, methylesterase shown to have carboxylesterase activity in vitro. This chain is Methylesterase 8, found in Arabidopsis thaliana (Mouse-ear cress).